We begin with the raw amino-acid sequence, 213 residues long: Thymidylate kinase (213 aa).

11 to 18 (GPEGAGKT) is a binding site for ATP.

The protein belongs to the thymidylate kinase family.

It carries out the reaction dTMP + ATP = dTDP + ADP. Its function is as follows. Phosphorylation of dTMP to form dTDP in both de novo and salvage pathways of dTTP synthesis. The chain is Thymidylate kinase from Leuconostoc mesenteroides subsp. mesenteroides (strain ATCC 8293 / DSM 20343 / BCRC 11652 / CCM 1803 / JCM 6124 / NCDO 523 / NBRC 100496 / NCIMB 8023 / NCTC 12954 / NRRL B-1118 / 37Y).